The sequence spans 636 residues: Carbon monoxide dehydrogenase 1 (636 aa).

Positions 38, 46, 47, 50, 55, and 69 each coordinate [4Fe-4S] cluster. The [Ni-4Fe-5S] cluster site is built by His262, Cys297, Cys335, Cys448, Cys478, and Cys528.

Belongs to the Ni-containing carbon monoxide dehydrogenase family. In terms of assembly, homodimer. It depends on [4Fe-4S] cluster as a cofactor. The cofactor is [Ni-4Fe-5S] cluster.

It is found in the cytoplasm. It localises to the cell membrane. The enzyme catalyses CO + 2 oxidized [2Fe-2S]-[ferredoxin] + H2O = 2 reduced [2Fe-2S]-[ferredoxin] + CO2 + 2 H(+). With respect to regulation, inactivated by O(2). Functionally, CODH oxidizes carbon monoxide coupled, via CooF, to the reduction of a hydrogen cation by a hydrogenase (possibly CooH). The sequence is that of Carbon monoxide dehydrogenase 1 (cooS1) from Carboxydothermus hydrogenoformans (strain ATCC BAA-161 / DSM 6008 / Z-2901).